Reading from the N-terminus, the 203-residue chain is Snake venom metalloproteinase fibrolase (203 aa).

Gln1 carries the pyrrolidone carboxylic acid modification. One can recognise a Peptidase M12B domain in the interval 7–203 (RYVQLVIVAD…NNPQCILNKP (197 aa)). Disulfide bonds link Cys118–Cys198, Cys158–Cys182, and Cys160–Cys165. A Zn(2+)-binding site is contributed by His143. The active site involves Glu144. Zn(2+) contacts are provided by His147 and His153.

It belongs to the venom metalloproteinase (M12B) family. P-I subfamily. In terms of assembly, monomer. Requires Zn(2+) as cofactor. In terms of tissue distribution, expressed by the venom gland.

It is found in the secreted. The enzyme catalyses Hydrolysis of 14-Ala-|-Leu-15 in insulin B chain and 413-Lys-|-Leu-414 in alpha-chain of fibrinogen.. Is inhibited by EDTA, o-phenanthroline and tetraethylenepentamine. Snake venom zinc metalloprotease that exhibits direct fibrinolytic activity. In Agkistrodon contortrix contortrix (Southern copperhead), this protein is Snake venom metalloproteinase fibrolase.